The primary structure comprises 381 residues: Alanine racemase, catabolic (381 aa).

Lys-55 acts as the Proton acceptor; specific for D-alanine in catalysis. N6-(pyridoxal phosphate)lysine is present on Lys-55. Arg-154 serves as a coordination point for substrate. Tyr-276 serves as the catalytic Proton acceptor; specific for L-alanine. Met-322 serves as a coordination point for substrate.

It belongs to the alanine racemase family. It depends on pyridoxal 5'-phosphate as a cofactor.

The enzyme catalyses L-alanine = D-alanine. In terms of biological role, isomerizes L-alanine to D-alanine which is then oxidized to pyruvate by DadA. The sequence is that of Alanine racemase, catabolic (dadB) from Mesorhizobium japonicum (strain LMG 29417 / CECT 9101 / MAFF 303099) (Mesorhizobium loti (strain MAFF 303099)).